Consider the following 310-residue polypeptide: Homoserine O-acetyltransferase (310 aa).

The active-site Acyl-thioester intermediate is cysteine 142. 2 residues coordinate substrate: lysine 163 and serine 192. The active-site Proton acceptor is histidine 235. Glutamate 237 is an active-site residue. Residue arginine 249 participates in substrate binding.

Belongs to the MetA family.

The protein localises to the cytoplasm. The enzyme catalyses L-homoserine + acetyl-CoA = O-acetyl-L-homoserine + CoA. Its pathway is amino-acid biosynthesis; L-methionine biosynthesis via de novo pathway; O-acetyl-L-homoserine from L-homoserine: step 1/1. In terms of biological role, transfers an acetyl group from acetyl-CoA to L-homoserine, forming acetyl-L-homoserine. The polypeptide is Homoserine O-acetyltransferase (Agathobacter rectalis (strain ATCC 33656 / DSM 3377 / JCM 17463 / KCTC 5835 / VPI 0990) (Eubacterium rectale)).